A 278-amino-acid polypeptide reads, in one-letter code: 4-deoxy-L-threo-5-hexosulose-uronate ketol-isomerase (278 aa).

Zn(2+)-binding residues include His196, His198, Glu203, and His245.

It belongs to the KduI family. Homohexamer. Zn(2+) serves as cofactor.

It carries out the reaction 5-dehydro-4-deoxy-D-glucuronate = 3-deoxy-D-glycero-2,5-hexodiulosonate. The protein operates within glycan metabolism; pectin degradation; 2-dehydro-3-deoxy-D-gluconate from pectin: step 4/5. Its function is as follows. Catalyzes the isomerization of 5-dehydro-4-deoxy-D-glucuronate to 3-deoxy-D-glycero-2,5-hexodiulosonate. This Escherichia coli (strain 55989 / EAEC) protein is 4-deoxy-L-threo-5-hexosulose-uronate ketol-isomerase.